Consider the following 741-residue polypeptide: Protein lin-54 homolog (741 aa).

The region spanning 513-626 (PRKPCNCTKS…KCIGCKNFEE (114 aa)) is the CRC domain. The tract at residues 515–528 (KPCNCTKSLCLKLY) is DNA-binding. Positions 517, 519, 524, 529, 531, 538, 541, 543, and 546 each coordinate Zn(2+). The tract at residues 575–588 (IGKGKEGESDRRHS) is linker. 9 residues coordinate Zn(2+): C591, C593, C598, C603, C605, C612, C616, C618, and C621. Residues 591–604 (CNCKRSGCLKNYCE) are DNA-binding.

Belongs to the lin-54 family. As to quaternary structure, component of the DREAM complex.

It is found in the nucleus. Its function is as follows. Component of the DREAM complex, a multiprotein complex that can both act as a transcription activator or repressor depending on the context. Specifically recognizes the consensus motif 5'-TTYRAA-3' in target DNA. In Xenopus tropicalis (Western clawed frog), this protein is Protein lin-54 homolog (lin54).